The primary structure comprises 303 residues: Lipoyl synthase (303 aa).

7 residues coordinate [4Fe-4S] cluster: Cys34, Cys39, Cys45, Cys60, Cys64, Cys67, and Ser273. A Radical SAM core domain is found at 46–262 (WSKKHATVMI…ERVARTKGFL (217 aa)).

It belongs to the radical SAM superfamily. Lipoyl synthase family. The cofactor is [4Fe-4S] cluster.

It localises to the cytoplasm. It carries out the reaction [[Fe-S] cluster scaffold protein carrying a second [4Fe-4S](2+) cluster] + N(6)-octanoyl-L-lysyl-[protein] + 2 oxidized [2Fe-2S]-[ferredoxin] + 2 S-adenosyl-L-methionine + 4 H(+) = [[Fe-S] cluster scaffold protein] + N(6)-[(R)-dihydrolipoyl]-L-lysyl-[protein] + 4 Fe(3+) + 2 hydrogen sulfide + 2 5'-deoxyadenosine + 2 L-methionine + 2 reduced [2Fe-2S]-[ferredoxin]. It functions in the pathway protein modification; protein lipoylation via endogenous pathway; protein N(6)-(lipoyl)lysine from octanoyl-[acyl-carrier-protein]: step 2/2. Functionally, catalyzes the radical-mediated insertion of two sulfur atoms into the C-6 and C-8 positions of the octanoyl moiety bound to the lipoyl domains of lipoate-dependent enzymes, thereby converting the octanoylated domains into lipoylated derivatives. The sequence is that of Lipoyl synthase from Rickettsia bellii (strain OSU 85-389).